We begin with the raw amino-acid sequence, 1934 residues long: Myosin-7 (1934 aa).

In terms of domain architecture, Myosin N-terminal SH3-like spans 31 to 80; it reads DLKKDVFVPDDKEEFVKAKIVSREGGKVTAETENGKTVTVKEDQVMQQNP. The region spanning 84-777 is the Myosin motor domain; that stretch reads DKIEDMAMLT…LLGLLEEMRD (694 aa). Lys-128 is subject to N6,N6,N6-trimethyllysine. 177–184 lines the ATP pocket; that stretch reads GESGAGKT. Phosphothreonine is present on Thr-377. 2 actin-binding regions span residues 654 to 676 and 756 to 770; these read LNKL…IPNE and KFGH…GLLG. Residues 780-809 form the IQ domain; the sequence is LSRIITRIQAQSRGLLSRMEFKKLLERRDS. Positions 839–1934 form a coiled coil; the sequence is LKSAETEKEM…DIGAKGLNEE (1096 aa). Phosphoserine occurs at positions 1136 and 1268. Phosphothreonine is present on Thr-1281. Residue Tyr-1307 is modified to Phosphotyrosine. The residue at position 1308 (Thr-1308) is a Phosphothreonine. Ser-1509 carries the post-translational modification Phosphoserine. Thr-1512 is modified (phosphothreonine). Positions 1914-1934 are disordered; sequence SQVNKLRAKSRDIGAKGLNEE. The segment covering 1922 to 1934 has biased composition (basic and acidic residues); sequence KSRDIGAKGLNEE.

Belongs to the TRAFAC class myosin-kinesin ATPase superfamily. Myosin family. Muscle myosin is a hexameric protein that consists of 2 heavy chain subunits (MHC), 2 alkali light chain subunits (MLC) and 2 regulatory light chain subunits (MLC-2). Interacts with ECPAS. Interacts (via C-terminus) with LRRC39.

The protein resides in the cytoplasm. The protein localises to the myofibril. It localises to the sarcomere. Functionally, myosins are actin-based motor molecules with ATPase activity essential for muscle contraction. Forms regular bipolar thick filaments that, together with actin thin filaments, constitute the fundamental contractile unit of skeletal and cardiac muscle. This chain is Myosin-7 (MYH7), found in Mesocricetus auratus (Golden hamster).